Reading from the N-terminus, the 476-residue chain is Cytosolic Fe-S cluster assembly factor narfl (476 aa).

[4Fe-4S] cluster-binding residues include Cys24, Cys71, Cys74, Cys77, Cys190, Cys246, Cys395, and Cys399.

It belongs to the NARF family. In terms of assembly, component of the CIA complex.

Functionally, component of the cytosolic iron-sulfur protein assembly (CIA) complex, a multiprotein complex that mediates the incorporation of iron-sulfur cluster into extramitochondrial Fe/S proteins. The chain is Cytosolic Fe-S cluster assembly factor narfl (narfl) from Xenopus tropicalis (Western clawed frog).